We begin with the raw amino-acid sequence, 72 residues long: Translation initiation factor IF-1 (72 aa).

In terms of domain architecture, S1-like spans 1–72; the sequence is MSKDDSIEFE…TKGRITYRMK (72 aa).

It belongs to the IF-1 family. As to quaternary structure, component of the 30S ribosomal translation pre-initiation complex which assembles on the 30S ribosome in the order IF-2 and IF-3, IF-1 and N-formylmethionyl-tRNA(fMet); mRNA recruitment can occur at any time during PIC assembly.

The protein resides in the cytoplasm. In terms of biological role, one of the essential components for the initiation of protein synthesis. Stabilizes the binding of IF-2 and IF-3 on the 30S subunit to which N-formylmethionyl-tRNA(fMet) subsequently binds. Helps modulate mRNA selection, yielding the 30S pre-initiation complex (PIC). Upon addition of the 50S ribosomal subunit IF-1, IF-2 and IF-3 are released leaving the mature 70S translation initiation complex. This is Translation initiation factor IF-1 from Xanthomonas campestris pv. campestris (strain 8004).